Reading from the N-terminus, the 446-residue chain is Exodeoxyribonuclease 7 large subunit (446 aa).

It belongs to the XseA family. Heterooligomer composed of large and small subunits.

It localises to the cytoplasm. The catalysed reaction is Exonucleolytic cleavage in either 5'- to 3'- or 3'- to 5'-direction to yield nucleoside 5'-phosphates.. Functionally, bidirectionally degrades single-stranded DNA into large acid-insoluble oligonucleotides, which are then degraded further into small acid-soluble oligonucleotides. This chain is Exodeoxyribonuclease 7 large subunit, found in Streptococcus agalactiae serotype Ia (strain ATCC 27591 / A909 / CDC SS700).